The chain runs to 527 residues: Glutamate--cysteine ligase (527 aa).

Belongs to the glutamate--cysteine ligase type 1 family. Type 1 subfamily.

The enzyme catalyses L-cysteine + L-glutamate + ATP = gamma-L-glutamyl-L-cysteine + ADP + phosphate + H(+). It participates in sulfur metabolism; glutathione biosynthesis; glutathione from L-cysteine and L-glutamate: step 1/2. In Bordetella parapertussis (strain 12822 / ATCC BAA-587 / NCTC 13253), this protein is Glutamate--cysteine ligase.